Reading from the N-terminus, the 1391-residue chain is MNLLNLFNPLQTAGMEEEFDAIKIGIASPETIRSWSYGEVKKPETINYRTFKPERDGLFCAKIFGPVKDYECLCGKYKRLKFKGVTCEKCGVEVTLSKVRRERMGHIELAAPVAHIWFLKSLPSRLGMVLDMTLRDIERVLYFEAFVVTDPGMTPLQRRQLLTEDDYYNKLDEYGDDFDAKMGAEGIRELLRTLNVAGEIEILRQELESTGSDTKIKKIAKRLKVLEAFHRSGMKLEWMIMDVLPVLPPDLRPLVPLDGGRFATSDLNDLYRRVINRNNRLKRLLELHAPDIIVRNEKRMLQEAVDSLLDNGRRGKAMTGANKRPLKSLADMIKGKGGRFRQNLLGKRVDYSGRSVITVGPYLRLHQCGLPKKMALELFKPFIFHKLEKQGLASTVKAAKKLVEQEVPEVWDILEEVIREHPIMLNRAPTLHRLGIQAFEPILIEGKAIQLHPLVCAAFNADFDGDQMAVHVPLSLEAQMEARTLMLASNNVLSPANGEPIIVPSQDIVLGLYYMTRDRINAKGEGSLFADVKEVHRAYHTKQVELGTKITVRLREWVKNEAGEFEPVVNRYETTVGRALLSEILPKGLPFEYVNKALKKKEISKLINASFRLCGLRDTVIFADHLMYTGFGFAAKGGISIAVDDMEIPKEKAALLAEANAEVKEIEDQYRQGLVTNGERYNKVVDIWGRAGDKIAKAMMDNLSKQKVIDRAGNEVDQESFNSIYMMADSGARGSAAQIKQLSGMRGLMAKPDGSIIETPITSNFREGLTVLQYFIATHGARKGLADTALKTANSGYLTRRLVDVTQDLVVVEDDCGTSDGFVMKAVVQGGDVIEALRDRILGRVTASDVVDPSSGETLVEAGTLLTEKLVDMIDQSGVDEVKVRTPITCKTRHGLCAHCYGRDLARGKLVNAGEAVGVIAAQSIGEPGTQLTMRTFHIGGAASRAAAASQVEAKSNGTARFSSQMRYVANNKGELVVIGRSCEVVIHDDIGRERERHKVPYGAILLVQDGMAIKAGQTLATWDPHTRPMITEHAGMVKFENVEEGVTVAKQTDDVTGLSTLVVIDGKRRSSSASKLLRPTVKLLDENGVEICIPGTSTPVSMAFPVGAVITVREGQEIGKGDVLARIPQASSKTRDITGGLPRVAELFEARVPKDAGMLAEITGTVSFGKETKGKQRLIVTDVDGVAYETLISKEKQILVHDGQVVNRGETIVDGAVDPHDILRLQGIEALARYIVQEVQEVYRLQGVKISDKHIEVIIRQMLRRVNIADAGETGFITGEQVERGDVMAANEKALEEGKEPARYENVLLGITKASLSTDSFISAASFQETTRVLTEAAIMGKQDELRGLKENVIVGRLIPAGTGLTYHRSRHQQWQEVEQETAETQVTDE.

Residues Cys72, Cys74, Cys87, and Cys90 each coordinate Zn(2+). Residues Asp462, Asp464, and Asp466 each contribute to the Mg(2+) site. Residues Cys816, Cys890, Cys897, and Cys900 each coordinate Zn(2+).

Belongs to the RNA polymerase beta' chain family. As to quaternary structure, the RNAP catalytic core consists of 2 alpha, 1 beta, 1 beta' and 1 omega subunit. When a sigma factor is associated with the core the holoenzyme is formed, which can initiate transcription. It depends on Mg(2+) as a cofactor. The cofactor is Zn(2+).

The catalysed reaction is RNA(n) + a ribonucleoside 5'-triphosphate = RNA(n+1) + diphosphate. Functionally, DNA-dependent RNA polymerase catalyzes the transcription of DNA into RNA using the four ribonucleoside triphosphates as substrates. This Neisseria meningitidis serogroup B (strain ATCC BAA-335 / MC58) protein is DNA-directed RNA polymerase subunit beta'.